The chain runs to 482 residues: Scarecrow-like protein 3 (482 aa).

Residues 45-479 (LKPEERGLYL…RPLYSVSAWR (435 aa)) enclose the GRAS domain. Residues 52 to 115 (LYLIHLLLTC…ILKSWPGLYK (64 aa)) form a leucine repeat I (LRI) region. The segment at 134-199 (RRLFFEMFPI…EGPPHLRITG (66 aa)) is VHIID. The VHIID motif lies at 165–169 (VHVID). Residues 209 to 241 (QMAHRLIEEAEKLDIPFQFNPVVSRLDCLNVEQ) form a leucine repeat II (LRII) region. A PFYRE region spans residues 250 to 401 (LAVSSVLQLH…KMLFGEEIKN (152 aa)). Positions 302-324 (ENDMSNNNGYSPSGDSASSLPLP) are disordered. Residues 305-324 (MSNNNGYSPSGDSASSLPLP) are compositionally biased toward polar residues. The SAW stretch occupies residues 404 to 479 (SCEGFERRER…RPLYSVSAWR (76 aa)).

It belongs to the GRAS family. Binds to zinc finger proteins MGP/IDD3, IDD4, IDD5, BIB/IDD9 and JKD/IDD10. As to expression, expressed in seedlings, root epidermis, leaves, flowers and siliques.

The protein localises to the nucleus. Probable transcription factor involved in plant development. The polypeptide is Scarecrow-like protein 3 (Arabidopsis thaliana (Mouse-ear cress)).